A 1205-amino-acid chain; its full sequence is Chromosome partition protein Smc (1205 aa).

Residue 32–39 coordinates ATP; sequence PNGSGKSN. Coiled-coil stretches lie at residues 169–288 and 330–499; these read KHRK…SIQH and EELE…GLQR. The SMC hinge domain occupies 514–628; sequence GLFGSIAQLV…VNDLTEAMGL (115 aa). 3 coiled-coil regions span residues 661–771, 802–836, and 979–1033; these read LEVT…AQET, AVRT…RAQQ, and DRVT…KDLL.

Belongs to the SMC family. Homodimer.

The protein resides in the cytoplasm. Functionally, required for chromosome condensation and partitioning. This chain is Chromosome partition protein Smc, found in Mycobacterium tuberculosis (strain ATCC 25618 / H37Rv).